A 457-amino-acid polypeptide reads, in one-letter code: Protein trichome birefringence-like 4 (457 aa).

The helical; Signal-anchor for type II membrane protein transmembrane segment at 19–37 (IFLTSLFFLSLFLLSSSSL) threads the bilayer. The GDS motif signature appears at 173–175 (GDS). Positions 420 to 434 (DCSHWCLPGVPDSWN) match the DCXHWCLPGXXDXWN motif motif.

Belongs to the PC-esterase family. TBL subfamily.

The protein resides in the membrane. Functionally, may act as a bridging protein that binds pectin and other cell wall polysaccharides. Probably involved in maintaining esterification of pectins. May be involved in the specific O-acetylation of cell wall polymers. The protein is Protein trichome birefringence-like 4 (TBL4) of Arabidopsis thaliana (Mouse-ear cress).